A 548-amino-acid chain; its full sequence is Hydroxylamine reductase (548 aa).

4 residues coordinate [4Fe-4S] cluster: Cys-3, Cys-6, Cys-15, and Cys-21. Positions 239, 263, 307, 401, 429, 454, 489, and 491 each coordinate hybrid [4Fe-2O-2S] cluster. Cys-401 is subject to Cysteine persulfide.

This sequence belongs to the HCP family. [4Fe-4S] cluster is required as a cofactor. The cofactor is hybrid [4Fe-2O-2S] cluster.

The protein resides in the cytoplasm. It catalyses the reaction A + NH4(+) + H2O = hydroxylamine + AH2 + H(+). In terms of biological role, catalyzes the reduction of hydroxylamine to form NH(3) and H(2)O. This Desulfosudis oleivorans (strain DSM 6200 / JCM 39069 / Hxd3) (Desulfococcus oleovorans) protein is Hydroxylamine reductase.